The chain runs to 314 residues: Melanoma-associated antigen 6 (314 aa).

Residues 1–20 are compositionally biased toward basic and acidic residues; the sequence is MPLEQRSQHCKPEEGLEARG. The segment at 1–99 is disordered; that stretch reads MPLEQRSQHC…QEEEGPSTFP (99 aa). Positions 21-44 are enriched in low complexity; the sequence is EALGLVGAQAPATEEQEAASSSST. Residues 65-87 are compositionally biased toward polar residues; it reads PQGASSLPTTMNYPLWSQSYEDS. Residues 109–308 form the MAGE domain; it reads LSRKVAKLVH…ISYPLLHEWA (200 aa).

In terms of assembly, interacts with TRIM28. In terms of processing, ubiquitinated by the DCX(DCAF12) complex specifically recognizes the diglutamate (Glu-Glu) at the C-terminus, leading to its degradation. As to expression, expressed in many tumors of several types, such as melanoma, head and neck squamous cell carcinoma, lung carcinoma and breast carcinoma, but not in normal tissues except for testes.

Its function is as follows. Activator of ubiquitin ligase activity of RING-type zinc finger-containing E3 ubiquitin-protein ligases that acts as a repressor of autophagy. May enhance ubiquitin ligase activity of TRIM28 and stimulate p53/TP53 ubiquitination by TRIM28. Proposed to act through recruitment and/or stabilization of the Ubl-conjugating enzyme (E2) at the E3:substrate complex. May play a role in tumor transformation or aspects of tumor progression. In vitro promotes cell viability in melanoma cell lines. The polypeptide is Melanoma-associated antigen 6 (Homo sapiens (Human)).